We begin with the raw amino-acid sequence, 1422 residues long: Guanine nucleotide exchange factor subunit RIC1 (1422 aa).

2 WD repeats span residues 64–103 (TQFG…GDKY) and 304–343 (NKTG…LICT). Disordered stretches follow at residues 442–462 (NPKY…SPFA) and 986–1005 (SGES…SSSG). A compositionally biased stretch (basic and acidic residues) spans 449–460 (RAERMPRHEKSP). Phosphothreonine is present on residues T991 and T995. 5 positions are modified to phosphoserine: S1014, S1016, S1018, S1036, and S1171. The segment at 1021–1048 (AENVPPGKFGLQKTLSMPTGPSGKRWSK) is disordered. 2 disordered regions span residues 1179-1198 (THRD…DAFL) and 1355-1422 (DTFQ…CSVS). Residues 1378–1396 (GSCSHGSISQSEPGSNNVV) are compositionally biased toward polar residues. The span at 1403 to 1412 (TTQADEEEPL) shows a compositional bias: acidic residues.

The protein belongs to the RIC1 family. As to quaternary structure, forms a complex with RGP1; the interaction enhances RAB6A GTPase activity. Interacts (via central domain) with RGP1. Interacts with RAB6A; the interaction is direct with a preference for RAB6A-GDP. Interacts (via C-terminus domain) with RAB33B; the interaction is direct with a preference for RAB33B-GTP. Interacts with GJA1. As to expression, expressed in the eye lens.

It is found in the cytoplasm. Its subcellular location is the cytosol. It localises to the membrane. Its function is as follows. The RIC1-RGP1 complex acts as a guanine nucleotide exchange factor (GEF), which activates RAB6A by exchanging bound GDP for free GTP, and may thereby be required for efficient fusion of endosome-derived vesicles with the Golgi compartment. The RIC1-RGP1 complex participates in the recycling of mannose-6-phosphate receptors. Required for phosphorylation and localization of GJA1. Is a regulator of procollagen transport and secretion, and is required for correct cartilage morphogenesis and development of the craniofacial skeleton. In Mus musculus (Mouse), this protein is Guanine nucleotide exchange factor subunit RIC1.